Here is a 331-residue protein sequence, read N- to C-terminus: Ribosomal RNA small subunit methyltransferase H (331 aa).

Residues 56-58 (GGH), aspartate 76, phenylalanine 100, aspartate 122, and glutamine 129 each bind S-adenosyl-L-methionine.

The protein belongs to the methyltransferase superfamily. RsmH family.

It localises to the cytoplasm. The enzyme catalyses cytidine(1402) in 16S rRNA + S-adenosyl-L-methionine = N(4)-methylcytidine(1402) in 16S rRNA + S-adenosyl-L-homocysteine + H(+). Its function is as follows. Specifically methylates the N4 position of cytidine in position 1402 (C1402) of 16S rRNA. This is Ribosomal RNA small subunit methyltransferase H from Chromohalobacter salexigens (strain ATCC BAA-138 / DSM 3043 / CIP 106854 / NCIMB 13768 / 1H11).